The chain runs to 169 residues: Transcription regulatory protein SNF11 (169 aa).

A disordered region spans residues 1–24; that stretch reads MSSEIAYSNTNTNTENENRNTGAG. At S2 the chain carries N-acetylserine. Residues 9-21 show a composition bias toward low complexity; the sequence is NTNTNTENENRNT. A run of 8 repeats spans residues 28–31, 32–35, 36–39, 40–43, 44–47, 48–51, 76–80, and 160–165. Residues 28-51 form a 6 X 4 AA tandem repeats of N-[AT]-[NT]-A region; the sequence is NTNANANANATANATANATANATA. A 2 X 5 AA repeats of L-L-A-R-V region spans residues 76-165; the sequence is LLARVIQMNN…SKLYLLLARV (90 aa).

As to quaternary structure, component of the SWI/SNF global transcription activator complex. The 1.14 MDa SWI/SNF complex is composed of 11 different subunits: one copy each of SWI1, SNF2/SWI2, SNF5, SNF12/SWP73, ARP7/SWP61, ARP9/SWP59; two copies each of SWI3, SNF6, SNF11, SWP82; and three copies of TAF14/SWP29.

Its subcellular location is the nucleus. Involved in transcriptional activation. Component of the SWI/SNF complex, an ATP-dependent chromatin remodeling complex, which is required for the positive and negative regulation of gene expression of a large number of genes. It changes chromatin structure by altering DNA-histone contacts within a nucleosome, leading eventually to a change in nucleosome position, thus facilitating or repressing binding of gene-specific transcription factors. The polypeptide is Transcription regulatory protein SNF11 (SNF11) (Saccharomyces cerevisiae (strain ATCC 204508 / S288c) (Baker's yeast)).